The following is a 446-amino-acid chain: N-succinylarginine dihydrolase (446 aa).

Residues 19 to 28 (AGLSFGNVAS), Asn110, and 137 to 138 (HR) contribute to the substrate site. Glu174 is a catalytic residue. Residue Arg213 coordinates substrate. His249 is a catalytic residue. The substrate site is built by Asp251 and Asn364. Catalysis depends on Cys370, which acts as the Nucleophile.

It belongs to the succinylarginine dihydrolase family. In terms of assembly, homodimer.

It catalyses the reaction N(2)-succinyl-L-arginine + 2 H2O + 2 H(+) = N(2)-succinyl-L-ornithine + 2 NH4(+) + CO2. It participates in amino-acid degradation; L-arginine degradation via AST pathway; L-glutamate and succinate from L-arginine: step 2/5. Catalyzes the hydrolysis of N(2)-succinylarginine into N(2)-succinylornithine, ammonia and CO(2). In Paraburkholderia xenovorans (strain LB400), this protein is N-succinylarginine dihydrolase.